A 211-amino-acid polypeptide reads, in one-letter code: Uracil phosphoribosyltransferase (211 aa).

Residues Arg-78, Arg-103, and 130-138 contribute to the 5-phospho-alpha-D-ribose 1-diphosphate site; that span reads DPMLATGGS. Uracil contacts are provided by residues Ile-193 and 198 to 200; that span reads GDA. Asp-199 is a binding site for 5-phospho-alpha-D-ribose 1-diphosphate.

Belongs to the UPRTase family. Mg(2+) is required as a cofactor.

It catalyses the reaction UMP + diphosphate = 5-phospho-alpha-D-ribose 1-diphosphate + uracil. It participates in pyrimidine metabolism; UMP biosynthesis via salvage pathway; UMP from uracil: step 1/1. Allosterically activated by GTP. Its function is as follows. Catalyzes the conversion of uracil and 5-phospho-alpha-D-ribose 1-diphosphate (PRPP) to UMP and diphosphate. In Hahella chejuensis (strain KCTC 2396), this protein is Uracil phosphoribosyltransferase.